A 268-amino-acid polypeptide reads, in one-letter code: Hydroxyacylglutathione hydrolase (268 aa).

The Zn(2+) site is built by H56, H58, D60, H61, H112, D137, and H176. 176-178 (HEY) provides a ligand contact to substrate.

Belongs to the metallo-beta-lactamase superfamily. Glyoxalase II family. As to quaternary structure, monomer. The cofactor is Zn(2+).

It catalyses the reaction an S-(2-hydroxyacyl)glutathione + H2O = a 2-hydroxy carboxylate + glutathione + H(+). It participates in secondary metabolite metabolism; methylglyoxal degradation; (R)-lactate from methylglyoxal: step 2/2. Thiolesterase that catalyzes the hydrolysis of S-D-lactoyl-glutathione to form glutathione and D-lactic acid. In Dictyostelium discoideum (Social amoeba), this protein is Hydroxyacylglutathione hydrolase (hagh).